The primary structure comprises 544 residues: Pentatricopeptide repeat-containing protein At1g66345, mitochondrial (544 aa).

Residues 1–116 (MASALRRLVE…RNLRHGIKSY (116 aa)) constitute a mitochondrion transit peptide. PPR repeat units follow at residues 163–197 (TPLV…GFTL), 198–232 (SVIT…RIYP), 233–267 (NEIT…RCLP), 268–302 (SVIV…NMVV), 303–337 (DTIG…GFSA), 338–372 (NSFV…GVSP), 373–407 (YDET…GLMP), 408–442 (SCSA…GFVP), 443–477 (DEHT…KMSP), 478–512 (GFEV…LIEP), and 513–544 (NADI…ISVR).

This sequence belongs to the PPR family. P subfamily.

The protein localises to the mitochondrion. The protein is Pentatricopeptide repeat-containing protein At1g66345, mitochondrial of Arabidopsis thaliana (Mouse-ear cress).